A 213-amino-acid polypeptide reads, in one-letter code: MGSNYIVIEGLEGAGKTTARDVVVETLEQLGIRNMIFTREPGGTQLAEKLRSLVLDIRSVGDEVITDKAEVLMFYAARVQLVETVIKPALAQGVWVIGDRHDLSTQAYQGGGRGIDQTMLATLRDAVLGDFRPDLTLYLDVTPEVGLKRARARGDLDRIEQESFDFFNRTRARYLELAAQDPRIRTIDATQPLDAVMRDIRATVTTWVQGQAA.

ATP is bound at residue 10-17 (GLEGAGKT).

Belongs to the thymidylate kinase family.

The enzyme catalyses dTMP + ATP = dTDP + ADP. Its function is as follows. Phosphorylation of dTMP to form dTDP in both de novo and salvage pathways of dTTP synthesis. The polypeptide is Thymidylate kinase (Salmonella arizonae (strain ATCC BAA-731 / CDC346-86 / RSK2980)).